The chain runs to 275 residues: Enoyl-[acyl-carrier-protein] reductase [NADH] FabI (275 aa).

NAD(+) contacts are provided by residues G13, 19–20 (SI), 64–65 (DV), and V92. A substrate-binding site is contributed by A95. Catalysis depends on proton acceptor residues Y145 and Y155. NAD(+) contacts are provided by residues K162 and 191-195 (IRTLA).

Belongs to the short-chain dehydrogenases/reductases (SDR) family. FabI subfamily. Homotetramer.

It carries out the reaction a 2,3-saturated acyl-[ACP] + NAD(+) = a (2E)-enoyl-[ACP] + NADH + H(+). It functions in the pathway lipid metabolism; fatty acid biosynthesis. Functionally, catalyzes the reduction of a carbon-carbon double bond in an enoyl moiety that is covalently linked to an acyl carrier protein (ACP). Involved in the elongation cycle of fatty acid which are used in the lipid metabolism. This Helicobacter pylori (strain ATCC 700392 / 26695) (Campylobacter pylori) protein is Enoyl-[acyl-carrier-protein] reductase [NADH] FabI (fabI).